The primary structure comprises 170 residues: Adenine phosphoribosyltransferase (170 aa).

It belongs to the purine/pyrimidine phosphoribosyltransferase family. Homodimer.

It localises to the cytoplasm. It catalyses the reaction AMP + diphosphate = 5-phospho-alpha-D-ribose 1-diphosphate + adenine. It functions in the pathway purine metabolism; AMP biosynthesis via salvage pathway; AMP from adenine: step 1/1. In terms of biological role, catalyzes a salvage reaction resulting in the formation of AMP, that is energically less costly than de novo synthesis. The sequence is that of Adenine phosphoribosyltransferase from Streptococcus sanguinis (strain SK36).